Here is a 116-residue protein sequence, read N- to C-terminus: Neuropeptide Y receptor type 1 (116 aa).

The helical transmembrane segment at Leu-1–Val-6 threads the bilayer. Residues Glu-7–His-24 lie on the Cytoplasmic side of the membrane. Residues Ala-25–Ile-45 traverse the membrane as a helical segment. Over Tyr-46–Tyr-81 the chain is Extracellular. N-linked (GlcNAc...) asparagine glycosylation occurs at Asn-56. A helical membrane pass occupies residues Thr-82–Phe-102. Topologically, residues Lys-103 to Asp-116 are cytoplasmic.

Belongs to the G-protein coupled receptor 1 family.

It is found in the cell membrane. Its function is as follows. Receptor for neuropeptide Y and peptide YY. The chain is Neuropeptide Y receptor type 1 (NPY1R) from Ovis aries (Sheep).